The primary structure comprises 159 residues: Large ribosomal subunit protein uL22 (159 aa).

This sequence belongs to the universal ribosomal protein uL22 family. Part of the 50S ribosomal subunit.

This protein binds specifically to 23S rRNA. It makes multiple contacts with different domains of the 23S rRNA in the assembled 50S subunit and ribosome. Functionally, the globular domain of the protein is located near the polypeptide exit tunnel on the outside of the subunit, while an extended beta-hairpin is found that lines the wall of the exit tunnel in the center of the 70S ribosome. This is Large ribosomal subunit protein uL22 from Ignicoccus hospitalis (strain KIN4/I / DSM 18386 / JCM 14125).